Here is a 435-residue protein sequence, read N- to C-terminus: Monodictyphenone cluster transcription factor (435 aa).

Positions 23 to 50 (CHACALSKLKCSQDKPTCSRCVKRGTAC) form a DNA-binding region, zn(2)-C6 fungal-type. The interval 117 to 147 (QYHQRTPSYPESIPSLLSSTGPGTSATSPLT) is disordered. The span at 130–147 (PSLLSSTGPGTSATSPLT) shows a compositional bias: low complexity.

Its subcellular location is the nucleus. Transcription factor that regulates the expression of the gene cluster that mediates the biosynthesis of monodictyphenone, a prenyl xanthone derivative. The polypeptide is Monodictyphenone cluster transcription factor (Emericella nidulans (strain FGSC A4 / ATCC 38163 / CBS 112.46 / NRRL 194 / M139) (Aspergillus nidulans)).